Here is a 242-residue protein sequence, read N- to C-terminus: 1-(5-phosphoribosyl)-5-[(5-phosphoribosylamino)methylideneamino] imidazole-4-carboxamide isomerase (242 aa).

D8 functions as the Proton acceptor in the catalytic mechanism. The active-site Proton donor is the D129.

It belongs to the HisA/HisF family.

The protein localises to the cytoplasm. It catalyses the reaction 1-(5-phospho-beta-D-ribosyl)-5-[(5-phospho-beta-D-ribosylamino)methylideneamino]imidazole-4-carboxamide = 5-[(5-phospho-1-deoxy-D-ribulos-1-ylimino)methylamino]-1-(5-phospho-beta-D-ribosyl)imidazole-4-carboxamide. It participates in amino-acid biosynthesis; L-histidine biosynthesis; L-histidine from 5-phospho-alpha-D-ribose 1-diphosphate: step 4/9. The protein is 1-(5-phosphoribosyl)-5-[(5-phosphoribosylamino)methylideneamino] imidazole-4-carboxamide isomerase of Clostridium botulinum (strain Kyoto / Type A2).